A 350-amino-acid chain; its full sequence is S-adenosylmethionine:tRNA ribosyltransferase-isomerase (350 aa).

Belongs to the QueA family. Monomer.

Its subcellular location is the cytoplasm. It catalyses the reaction 7-aminomethyl-7-carbaguanosine(34) in tRNA + S-adenosyl-L-methionine = epoxyqueuosine(34) in tRNA + adenine + L-methionine + 2 H(+). It functions in the pathway tRNA modification; tRNA-queuosine biosynthesis. Its function is as follows. Transfers and isomerizes the ribose moiety from AdoMet to the 7-aminomethyl group of 7-deazaguanine (preQ1-tRNA) to give epoxyqueuosine (oQ-tRNA). This Parvibaculum lavamentivorans (strain DS-1 / DSM 13023 / NCIMB 13966) protein is S-adenosylmethionine:tRNA ribosyltransferase-isomerase.